A 295-amino-acid polypeptide reads, in one-letter code: MGPYLSQPKTEKTSVTGQNQVLQYAATHMQGWRNTMEDAHISDLNIEPDVHLFAVFDGHGGSEVAIFAERHFREELMKNKNYQQKNYEKALTETFFKIDKMLQEPSGLDELNKIRGVTDEASLAGCTANVALIVGKTLYVANAGDSRSFLNRDGKPFDMSKDHKPDDEQEKKRIERAGGFVSDGRVNGNLSLSRALGDLEYKKDNRFKPEEQIITALPDVKVTQLSAADKFLLMGCDGVFETWDHQQILNFINSELKNTQNLQKAAEKLLDQLLAKDTSLGTGCDNMTCILIQFK.

The 272-residue stretch at 23-294 (QYAATHMQGW…DNMTCILIQF (272 aa)) folds into the PPM-type phosphatase domain. Mn(2+) is bound by residues Asp-57, Gly-58, Asp-237, and Asp-285.

It belongs to the PP2C family. The cofactor is Mg(2+). It depends on Mn(2+) as a cofactor.

The protein localises to the membrane. The catalysed reaction is O-phospho-L-seryl-[protein] + H2O = L-seryl-[protein] + phosphate. It catalyses the reaction O-phospho-L-threonyl-[protein] + H2O = L-threonyl-[protein] + phosphate. Its function is as follows. Enzyme with a broad specificity. The protein is Probable protein phosphatase 2C 6 of Paramecium tetraurelia.